Consider the following 457-residue polypeptide: tRNA modification GTPase MnmE (457 aa).

3 residues coordinate (6S)-5-formyl-5,6,7,8-tetrahydrofolate: R25, E87, and R126. The TrmE-type G domain maps to 223-377 (GIATAIIGRP…IEEKINQLFF (155 aa)). N233 is a binding site for K(+). Residues 233–238 (NVGKSS), 252–258 (TDIAGTT), and 277–280 (DTAG) contribute to the GTP site. S237 lines the Mg(2+) pocket. Positions 252, 254, and 257 each coordinate K(+). T258 serves as a coordination point for Mg(2+). K457 serves as a coordination point for (6S)-5-formyl-5,6,7,8-tetrahydrofolate.

This sequence belongs to the TRAFAC class TrmE-Era-EngA-EngB-Septin-like GTPase superfamily. TrmE GTPase family. As to quaternary structure, homodimer. Heterotetramer of two MnmE and two MnmG subunits. The cofactor is K(+).

The protein localises to the cytoplasm. Its function is as follows. Exhibits a very high intrinsic GTPase hydrolysis rate. Involved in the addition of a carboxymethylaminomethyl (cmnm) group at the wobble position (U34) of certain tRNAs, forming tRNA-cmnm(5)s(2)U34. This Streptococcus suis (strain 98HAH33) protein is tRNA modification GTPase MnmE.